Here is a 92-residue protein sequence, read N- to C-terminus: YcgL domain-containing protein SO_2575 (92 aa).

In terms of domain architecture, YcgL spans 1–85 (MLCAVYKSSR…PQVNLLAEHR (85 aa)).

This is YcgL domain-containing protein SO_2575 from Shewanella oneidensis (strain ATCC 700550 / JCM 31522 / CIP 106686 / LMG 19005 / NCIMB 14063 / MR-1).